Reading from the N-terminus, the 233-residue chain is Large ribosomal subunit protein uL1 (233 aa).

This sequence belongs to the universal ribosomal protein uL1 family. As to quaternary structure, part of the 50S ribosomal subunit.

Its function is as follows. Binds directly to 23S rRNA. The L1 stalk is quite mobile in the ribosome, and is involved in E site tRNA release. Functionally, protein L1 is also a translational repressor protein, it controls the translation of the L11 operon by binding to its mRNA. The polypeptide is Large ribosomal subunit protein uL1 (Zymomonas mobilis subsp. mobilis (strain ATCC 31821 / ZM4 / CP4)).